The primary structure comprises 355 residues: Glucose-6-phosphatase 2 (355 aa).

Over 1–24 (MDFLHRSGVLIIHHLQEDYRTYYG) the chain is Lumenal. A helical transmembrane segment spans residues 25 to 45 (FLNFMSNVGDPRNIFSIYFPL). Topologically, residues 46 to 56 (WFQLNQNVGTK) are cytoplasmic. A helical membrane pass occupies residues 57–77 (MIWVAVIGDWFNLIFKWILFG). Over 78-115 (HRPYWWIQETEIYPNHSSPCLEQFPTTCETGPGSPSGH) the chain is Lumenal. R79 serves as a coordination point for substrate. A glycan (N-linked (GlcNAc...) asparagine) is linked at N92. H115 functions as the Proton donor in the catalytic mechanism. The chain crosses the membrane as a helical span at residues 116–136 (AMGSSCVWYVMVTAALSYTIS). The Cytoplasmic portion of the chain corresponds to 137-146 (RMEESSVTLH). Residues 147 to 167 (RLTWSFLWSVFWLIQISVCIS) form a helical membrane-spanning segment. Residue R168 is a topological domain, lumenal. R168 is a substrate binding site. Residues 169 to 189 (VFIATHFPHQVILGVIGGMLV) form a helical membrane-spanning segment. H174 functions as the Nucleophile in the catalytic mechanism. The Cytoplasmic portion of the chain corresponds to 190–211 (AEAFEHTPGVHMASLSVYLKTN). The helical transmembrane segment at 212 to 232 (VFLFLFALGFYLLLRLFGIDL) threads the bilayer. Over 233–252 (LWSVPIAKKWCANPDWIHID) the chain is Lumenal. Residues 253 to 273 (STPFAGLVRNLGVLFGLGFAI) form a helical membrane-spanning segment. The Cytoplasmic segment spans residues 274 to 290 (NSEMFLRSCQGENGTKP). Residues 291–307 (SFRLLCALTSLTTMQLY) traverse the membrane as a helical segment. Topologically, residues 308–318 (RFIKIPTHAEP) are lumenal. Residues 319-339 (LFYLLSFCKSASIPLMVVALI) form a helical membrane-spanning segment. Topologically, residues 340 to 355 (PYCVHMLMRPGDKKTK) are cytoplasmic. The short motif at 352 to 355 (KKTK) is the Prevents secretion from ER element.

It belongs to the glucose-6-phosphatase family. N-glycosylated; the non-glycosylated form is more unstable and is degraded through the proteasome. As to expression, specifically expressed in pancreatic islet cells, in particular those of beta-cell origin. Not detected in testis, kidney, muscle, liver, lung, spleen, brain, pituitary, gastric fundus or heart.

Its subcellular location is the endoplasmic reticulum membrane. The enzyme catalyses D-glucose 6-phosphate + H2O = D-glucose + phosphate. It functions in the pathway carbohydrate biosynthesis; gluconeogenesis. May hydrolyze glucose-6-phosphate to glucose in the endoplasmic reticulum. May be responsible for glucose production through glycogenolysis and gluconeogenesis. This chain is Glucose-6-phosphatase 2 (G6pc2), found in Mus musculus (Mouse).